The primary structure comprises 261 residues: Phosphonates import ATP-binding protein PhnC (261 aa).

The ABC transporter domain occupies 15 to 257 (LCLENTSAVY…LERSAIPPKR (243 aa)). 48–55 (GPSGSGKS) serves as a coordination point for ATP.

This sequence belongs to the ABC transporter superfamily. Phosphonates importer (TC 3.A.1.9.1) family. The complex is composed of two ATP-binding proteins (PhnC), two transmembrane proteins (PhnE) and a solute-binding protein (PhnD).

The protein localises to the cell inner membrane. The enzyme catalyses phosphonate(out) + ATP + H2O = phosphonate(in) + ADP + phosphate + H(+). Part of the ABC transporter complex PhnCDE involved in phosphonates import. Responsible for energy coupling to the transport system. The polypeptide is Phosphonates import ATP-binding protein PhnC (Hyphomonas neptunium (strain ATCC 15444)).